The following is a 546-amino-acid chain: Membrane protein insertase YidC (546 aa).

Residues 6-26 traverse the membrane as a helical segment; that stretch reads LILFIVFSFSLLLLWEAWQDK. The segment at 31–56 is disordered; sequence PATRPVAGAPAGSAAPTPSTALNAPA. Residues 37–56 are compositionally biased toward low complexity; the sequence is AGAPAGSAAPTPSTALNAPA. A run of 4 helical transmembrane segments spans residues 351-371, 425-445, 465-482, and 494-514; these read LVGN…LALY, LPIL…LAAV, WYIL…QVKL, and IMMI…AGLV.

Belongs to the OXA1/ALB3/YidC family. Type 1 subfamily. As to quaternary structure, interacts with the Sec translocase complex via SecD. Specifically interacts with transmembrane segments of nascent integral membrane proteins during membrane integration.

It localises to the cell inner membrane. Required for the insertion and/or proper folding and/or complex formation of integral membrane proteins into the membrane. Involved in integration of membrane proteins that insert both dependently and independently of the Sec translocase complex, as well as at least some lipoproteins. Aids folding of multispanning membrane proteins. This chain is Membrane protein insertase YidC, found in Thiobacillus denitrificans (strain ATCC 25259 / T1).